A 574-amino-acid chain; its full sequence is MSRRLIYVLNINRKSTHKIQENEIYTYFSYCNIDHTSTELDFVVKNYDLNRRQPVTGYTALHCYLYNNYFTNDVLKVLLNHGVDVTIKPSSGHMPIYILLTRCCNISHNVVIDMINKDKTHLSHKDYSNLLLEYIKSRYMLLKEEDIDENIVSTLLDKGIDPNFKQDGYTALHYYYLCLAHVYKPGECRKPITIKKAKRIISLFIQHGANLNALDNCGNTPFHLYLSIEMCNNIHMTKMLLTFNPNFEICNNHGLTPILCYITSDYIQHDILVMLIHHYETNVGEMPIDERRMIVFEFIKTYSTRPLDSITYLMNRFKNIDIHTRYEGKTLLHIACEYNNTHVIDYLIRINGDINALTDNNKHAIQLIIDNKENSQYTIDCLLYILRYIVDKNVIRSLVDQLPYLPIFDIKSFEKFISYCILLDDTFYDRHVQNRDSKTYRYTFSKYISFDKYDSIITKCYEETILLKLSTVLDTTLYSVLRCHNSRKLKRYLSVLKKYNNDKSFKIYSNIMNERYLNVYYKDMYVSKVYDKLFPVFTDKKCLLTLLPSEIIYEILYMLTIYDLYNISYPPTKV.

ANK repeat units follow at residues 56–87, 135–164, 167–213, 217–249, 253–285, and 327–356; these read TGYT…DVTI, IKSR…DPNF, DGYT…NLNA, CGNT…NFEI, HGLT…NVGE, and EGKT…DINA. Residues 541-574 enclose the F-box domain; sequence KCLLTLLPSEIIYEILYMLTIYDLYNISYPPTKV.

The sequence is that of Ankyrin repeat protein B18 from Variola virus (isolate Human/India/Ind3/1967) (VARV).